The following is a 487-amino-acid chain: Protein DETOXIFICATION 10 (487 aa).

12 consecutive transmembrane segments (helical) span residues 35–55 (LICF…IQII), 73–93 (FAVS…SCAL), 122–142 (LVCL…VILG), 155–175 (AAWL…IRYF), 184–204 (LLVT…LLVY), 211–231 (IGGA…LGSF), 264–284 (AAML…SGLL), 293–313 (VLSI…AIAA), 333–353 (IVVY…SMSL), 377–397 (MAPL…LSGV), 412–432 (FGAF…WVHL), and 435–455 (VGLW…LALV).

This sequence belongs to the multi antimicrobial extrusion (MATE) (TC 2.A.66.1) family.

Its subcellular location is the membrane. This chain is Protein DETOXIFICATION 10, found in Arabidopsis thaliana (Mouse-ear cress).